The sequence spans 160 residues: Ribosome-binding factor A (160 aa).

Residues 112–122 (KARQSDEKVRE) are compositionally biased toward basic and acidic residues. The disordered stretch occupies residues 112–160 (KARQSDEKVREASAGATYAGEADPYRKPDEDETDTEGAVEADETDDTAK). Over residues 141-160 (EDETDTEGAVEADETDDTAK) the composition is skewed to acidic residues.

This sequence belongs to the RbfA family. Monomer. Binds 30S ribosomal subunits, but not 50S ribosomal subunits or 70S ribosomes.

The protein resides in the cytoplasm. In terms of biological role, one of several proteins that assist in the late maturation steps of the functional core of the 30S ribosomal subunit. Associates with free 30S ribosomal subunits (but not with 30S subunits that are part of 70S ribosomes or polysomes). Required for efficient processing of 16S rRNA. May interact with the 5'-terminal helix region of 16S rRNA. This is Ribosome-binding factor A from Streptomyces coelicolor (strain ATCC BAA-471 / A3(2) / M145).